The chain runs to 124 residues: Small ribosomal subunit protein uS12 (124 aa).

At Asp-89 the chain carries 3-methylthioaspartic acid.

This sequence belongs to the universal ribosomal protein uS12 family. As to quaternary structure, part of the 30S ribosomal subunit. Contacts proteins S8 and S17. May interact with IF1 in the 30S initiation complex.

With S4 and S5 plays an important role in translational accuracy. In terms of biological role, interacts with and stabilizes bases of the 16S rRNA that are involved in tRNA selection in the A site and with the mRNA backbone. Located at the interface of the 30S and 50S subunits, it traverses the body of the 30S subunit contacting proteins on the other side and probably holding the rRNA structure together. The combined cluster of proteins S8, S12 and S17 appears to hold together the shoulder and platform of the 30S subunit. This chain is Small ribosomal subunit protein uS12, found in Psychrobacter arcticus (strain DSM 17307 / VKM B-2377 / 273-4).